A 335-amino-acid chain; its full sequence is Holliday junction branch migration complex subunit RuvB (335 aa).

A large ATPase domain (RuvB-L) region spans residues 4 to 184; the sequence is ADRIISGQAK…FGIVQRLEFY (181 aa). ATP is bound by residues I23, R24, G65, K68, T69, T70, 131–133, R174, Y184, and R221; that span reads EDY. T69 contacts Mg(2+). A small ATPAse domain (RuvB-S) region spans residues 185 to 255; the sequence is SVEDLTSIVA…VAKQALSMLD (71 aa). The head domain (RuvB-H) stretch occupies residues 258-335; the sequence is DAGFDYLDRK…RHFGLQKLSD (78 aa). Residues R294, R313, and R318 each coordinate DNA.

Belongs to the RuvB family. Homohexamer. Forms an RuvA(8)-RuvB(12)-Holliday junction (HJ) complex. HJ DNA is sandwiched between 2 RuvA tetramers; dsDNA enters through RuvA and exits via RuvB. An RuvB hexamer assembles on each DNA strand where it exits the tetramer. Each RuvB hexamer is contacted by two RuvA subunits (via domain III) on 2 adjacent RuvB subunits; this complex drives branch migration. In the full resolvosome a probable DNA-RuvA(4)-RuvB(12)-RuvC(2) complex forms which resolves the HJ.

The protein localises to the cytoplasm. It carries out the reaction ATP + H2O = ADP + phosphate + H(+). The RuvA-RuvB-RuvC complex processes Holliday junction (HJ) DNA during genetic recombination and DNA repair, while the RuvA-RuvB complex plays an important role in the rescue of blocked DNA replication forks via replication fork reversal (RFR). RuvA specifically binds to HJ cruciform DNA, conferring on it an open structure. The RuvB hexamer acts as an ATP-dependent pump, pulling dsDNA into and through the RuvAB complex. RuvB forms 2 homohexamers on either side of HJ DNA bound by 1 or 2 RuvA tetramers; 4 subunits per hexamer contact DNA at a time. Coordinated motions by a converter formed by DNA-disengaged RuvB subunits stimulates ATP hydrolysis and nucleotide exchange. Immobilization of the converter enables RuvB to convert the ATP-contained energy into a lever motion, pulling 2 nucleotides of DNA out of the RuvA tetramer per ATP hydrolyzed, thus driving DNA branch migration. The RuvB motors rotate together with the DNA substrate, which together with the progressing nucleotide cycle form the mechanistic basis for DNA recombination by continuous HJ branch migration. Branch migration allows RuvC to scan DNA until it finds its consensus sequence, where it cleaves and resolves cruciform DNA. The polypeptide is Holliday junction branch migration complex subunit RuvB (Haemophilus influenzae (strain 86-028NP)).